The following is a 475-amino-acid chain: Enolase (475 aa).

Gln-179 provides a ligand contact to (2R)-2-phosphoglycerate. The active-site Proton donor is Glu-221. Mg(2+) is bound by residues Asp-258, Glu-312, and Asp-339. (2R)-2-phosphoglycerate contacts are provided by Lys-364, Arg-393, Ser-394, and Lys-415. The active-site Proton acceptor is the Lys-364. Positions 454 to 475 (STPAATPKKSPAKKTTKAKSKK) are disordered. A compositionally biased stretch (basic residues) spans 463 to 475 (SPAKKTTKAKSKK).

It belongs to the enolase family. Requires Mg(2+) as cofactor.

The protein resides in the cell membrane. The protein localises to the cytoplasm. Its subcellular location is the secreted. It is found in the cell surface. It carries out the reaction (2R)-2-phosphoglycerate = phosphoenolpyruvate + H2O. It functions in the pathway carbohydrate degradation; glycolysis; pyruvate from D-glyceraldehyde 3-phosphate: step 4/5. In terms of biological role, catalyzes the reversible conversion of 2-phosphoglycerate (2-PG) into phosphoenolpyruvate (PEP). It is essential for the degradation of carbohydrates via glycolysis. Functionally, 'Moonlights' as a plasminogen receptor. Binds host (chicken) plasminogen; enolase antiserum inhibits M.gallisepticum adherence to chicken embryo fibroblasts. The protein is Enolase of Mycoplasmoides gallisepticum (strain R(low / passage 15 / clone 2)) (Mycoplasma gallisepticum).